The chain runs to 417 residues: Calreticulin (417 aa).

Positions 1–17 (MLLSVPLLLGLLGLAAA) are cleaved as a signal peptide. The tract at residues 18–197 (EPAVYFKEQF…NSQVESGSLE (180 aa)) is N-domain. Glutamine 26 provides a ligand contact to Ca(2+). Lysine 48 carries the post-translational modification N6-acetyllysine. Ca(2+) contacts are provided by lysine 62 and lysine 64. Cysteine 105 and cysteine 137 are joined by a disulfide. Tyrosine 109, lysine 111, tyrosine 128, and aspartate 135 together coordinate an alpha-D-glucoside. Residue lysine 159 is modified to N6-acetyllysine. The stretch at 191–202 (VESGSLEDDWDF) is one 1-1 repeat. The 4 X approximate repeats stretch occupies residues 191 to 255 (VESGSLEDDW…DAKKPEDWDE (65 aa)). The tract at residues 193-278 (SGSLEDDWDF…PEYKGEWKPR (86 aa)) is disordered. The segment at 198 to 308 (DDWDFLPPKK…YSPDPSIYAY (111 aa)) is P-domain. The span at 207-251 (KIKDPDASKPEDWDERAKIDDPTDSKPEDWDKPEHIPDPDAKKPE) shows a compositional bias: basic and acidic residues. Lysine 209 bears the N6-acetyllysine mark. 6 tandem repeats follow at residues 210 to 221 (DPDASKPEDWDE), 227 to 238 (DPTDSKPEDWDK), 244 to 255 (DPDAKKPEDWDE), 259 to 269 (GEWEPPVIQNP), 273 to 283 (GEWKPRQIDNP), and 287 to 297 (GTWIHPEIDNP). Positions 237–270 (DKPEHIPDPDAKKPEDWDEEMDGEWEPPVIQNPE) are interaction with PPIB. A compositionally biased stretch (acidic residues) spans 252-261 (DWDEEMDGEW). Residues 259-297 (GEWEPPVIQNPEYKGEWKPRQIDNPDYKGTWIHPEIDNP) form a 3 X approximate repeats region. The tract at residues 309–417 (DNFGVLGLDL…DVPGQAKDEL (109 aa)) is C-domain. Residue aspartate 317 participates in an alpha-D-glucoside binding. Residue aspartate 328 coordinates Ca(2+). The interval 350 to 417 (TKAAEKQMKD…DVPGQAKDEL (68 aa)) is disordered. Residues 352 to 379 (AAEKQMKDKQDEEQRLKEEEEDKKRKEE) are compositionally biased toward basic and acidic residues. A compositionally biased stretch (acidic residues) spans 380 to 409 (EEAEDKEDDEDKDEDEEDEEDKEEDEEEDV). The Prevents secretion from ER motif lies at 414-417 (KDEL).

It belongs to the calreticulin family. In terms of assembly, monomer. Component of an EIF2 complex at least composed of CELF1/CUGBP1, CALR, CALR3, EIF2S1, EIF2S2, HSP90B1 and HSPA5. Interacts with PDIA3/ERp57 and SPACA9. Interacts with TRIM21. Interacts with NR3C1. Interacts with PPIB. Interacts (via P-domain) with PDIA5. Interacts with GABARAP. Interacts with CLCC1.

It localises to the endoplasmic reticulum lumen. It is found in the cytoplasm. The protein resides in the cytosol. The protein localises to the secreted. Its subcellular location is the extracellular space. It localises to the extracellular matrix. It is found in the cell surface. The protein resides in the sarcoplasmic reticulum lumen. The protein localises to the cytoplasmic vesicle. Its subcellular location is the secretory vesicle. It localises to the cortical granule. It is found in the cytoplasmic granule. In terms of biological role, calcium-binding chaperone that promotes folding, oligomeric assembly and quality control in the endoplasmic reticulum (ER) via the calreticulin/calnexin cycle. This lectin interacts transiently with almost all of the monoglucosylated glycoproteins that are synthesized in the ER. Interacts with the DNA-binding domain of NR3C1 and mediates its nuclear export. Involved in maternal gene expression regulation. May participate in oocyte maturation via the regulation of calcium homeostasis. The sequence is that of Calreticulin (CALR) from Chlorocebus aethiops (Green monkey).